Consider the following 162-residue polypeptide: Peptide deformylase-like (162 aa).

Belongs to the polypeptide deformylase family.

In Staphylococcus aureus (strain COL), this protein is Peptide deformylase-like.